Here is a 449-residue protein sequence, read N- to C-terminus: Glucose-6-phosphate isomerase (449 aa).

Glu-291 functions as the Proton donor in the catalytic mechanism. Catalysis depends on residues His-312 and Lys-426.

This sequence belongs to the GPI family.

The protein localises to the cytoplasm. It carries out the reaction alpha-D-glucose 6-phosphate = beta-D-fructose 6-phosphate. It functions in the pathway carbohydrate biosynthesis; gluconeogenesis. Its pathway is carbohydrate degradation; glycolysis; D-glyceraldehyde 3-phosphate and glycerone phosphate from D-glucose: step 2/4. Catalyzes the reversible isomerization of glucose-6-phosphate to fructose-6-phosphate. In Streptococcus mutans serotype c (strain ATCC 700610 / UA159), this protein is Glucose-6-phosphate isomerase.